Reading from the N-terminus, the 433-residue chain is ATP-dependent protease ATPase subunit HslU (433 aa).

ATP contacts are provided by residues Val18, 60 to 65 (GVGKTE), Asp246, Glu311, and Arg383.

It belongs to the ClpX chaperone family. HslU subfamily. A double ring-shaped homohexamer of HslV is capped on each side by a ring-shaped HslU homohexamer. The assembly of the HslU/HslV complex is dependent on binding of ATP.

It localises to the cytoplasm. Its function is as follows. ATPase subunit of a proteasome-like degradation complex; this subunit has chaperone activity. The binding of ATP and its subsequent hydrolysis by HslU are essential for unfolding of protein substrates subsequently hydrolyzed by HslV. HslU recognizes the N-terminal part of its protein substrates and unfolds these before they are guided to HslV for hydrolysis. This is ATP-dependent protease ATPase subunit HslU from Rhodopseudomonas palustris (strain ATCC BAA-98 / CGA009).